The chain runs to 351 residues: Cell shape-determining protein MreB (351 aa).

ATP contacts are provided by residues 20 to 22, 169 to 171, 217 to 220, and 299 to 302; these read TAN, GGT, ERIK, and GGAL.

It belongs to the FtsA/MreB family. Forms polymers.

The protein localises to the cytoplasm. Functionally, forms membrane-associated dynamic filaments that are essential for cell shape determination. Acts by regulating cell wall synthesis and cell elongation, and thus cell shape. A feedback loop between cell geometry and MreB localization may maintain elongated cell shape by targeting cell wall growth to regions of negative cell wall curvature. This is Cell shape-determining protein MreB from Pasteurella multocida (strain Pm70).